The sequence spans 263 residues: Glycerol uptake facilitator protein (263 aa).

Over 1-7 the chain is Cytoplasmic; that stretch reads MNIYRKK. The chain crosses the membrane as a helical span at residues 8–36; the sequence is NIIKKCFMEFFGTGLVMFFGIGCLAASKL. At 37 to 41 the chain is on the extracellular side; it reads TNANF. Residues 42–62 form a helical membrane-spanning segment; it reads TQFEISCIWGFGVSIAIYFSS. Residues 63–65 are Cytoplasmic-facing; sequence SIS. An intramembrane segment occupies 66–69; sequence GAHL. Positions 70–72 match the NPA 1 motif; sequence NPA. Positions 70 to 80 form an intramembrane region, helical; that stretch reads NPAVTIFFWLS. Residues 81–86 lie on the Cytoplasmic side of the membrane; the sequence is SKLNKR. Residues 87–110 traverse the membrane as a helical segment; the sequence is KVLPYIISQTLGSFFFTMLTYYLY. Residues 111-145 are Extracellular-facing; sequence NNLLISFERNNNVVRGTQESLNLASIFCVYPNYNN. The chain crosses the membrane as a helical span at residues 146 to 171; the sequence is SFIYDFIIEIFSTALFILIVLEFNNR. Residues 172–181 lie on the Cytoplasmic side of the membrane; the sequence is NSNYFLYNRS. The chain crosses the membrane as a helical span at residues 182–198; the sequence is VAPILTGFLVCMINLVI. The Extracellular segment spans residues 199–202; sequence NPLN. The stretch at 203 to 206 is an intramembrane region; it reads NISL. Positions 207-209 match the NPA 2 motif; it reads NPA. An intramembrane region (helical) is located at residues 207-220; it reads NPARDLGPKILLSL. Over 221–236 the chain is Extracellular; the sequence is TGWGLFSFTGGNDNIL. A helical membrane pass occupies residues 237–259; the sequence is YCFIPIMGPILGANLGGWIHKTL. The Cytoplasmic portion of the chain corresponds to 260–263; the sequence is INNS.

This sequence belongs to the MIP/aquaporin (TC 1.A.8) family.

It is found in the cell membrane. It catalyses the reaction glycerol(in) = glycerol(out). Functionally, mediates glycerol diffusion across the cytoplasmic membrane via a pore-type mechanism. This Buchnera aphidicola subsp. Acyrthosiphon pisum (strain APS) (Acyrthosiphon pisum symbiotic bacterium) protein is Glycerol uptake facilitator protein (glpF).